We begin with the raw amino-acid sequence, 53 residues long: MRLKKRFKKFFISRKEYEKIEEILDIGLAKAMEETKDDELLTYDEIKELLGDK.

Forms heterodimers with RelE and possibly a heterotetramer RelE3-RelB3(2)-RelE3 from 2 heterodimers. The heterotetramer is probably not very stable in solution.

Functionally, antitoxin component of a type II toxin-antitoxin (TA) system. Probably neutralizes the toxic activity of cognate toxin RelE. This is Antitoxin RelB3 (relB3) from Methanocaldococcus jannaschii (strain ATCC 43067 / DSM 2661 / JAL-1 / JCM 10045 / NBRC 100440) (Methanococcus jannaschii).